The following is a 237-amino-acid chain: Peptidase E (237 aa).

Active-site charge relay system residues include S122, D137, and H159.

Belongs to the peptidase S51 family.

It is found in the cytoplasm. The catalysed reaction is Dipeptidase E catalyzes the hydrolysis of dipeptides Asp-|-Xaa. It does not act on peptides with N-terminal Glu, Asn or Gln, nor does it cleave isoaspartyl peptides.. In terms of biological role, hydrolyzes dipeptides containing N-terminal aspartate residues. May play a role in allowing the cell to use peptide aspartate to spare carbon otherwise required for the synthesis of the aspartate family of amino acids. This Shewanella baltica (strain OS155 / ATCC BAA-1091) protein is Peptidase E.